The sequence spans 274 residues: Cytochrome c oxidase subunit 3 (274 aa).

The next 7 helical transmembrane spans lie at 22–42 (PSPW…GGVM), 47–67 (FAAG…SMLL), 93–113 (GVVL…WAFF), 137–157 (PFEV…TITV), 170–190 (TILY…LQWV), 208–228 (FFVA…FLTV), and 248–268 (AAIW…VSVY).

The protein belongs to the cytochrome c oxidase subunit 3 family. In terms of assembly, component of the cytochrome c oxidase (complex IV, CIV), a multisubunit enzyme composed of a catalytic core of 3 subunits and several supernumerary subunits. The complex exists as a monomer or a dimer and forms supercomplexes (SCs) in the inner mitochondrial membrane with ubiquinol-cytochrome c oxidoreductase (cytochrome b-c1 complex, complex III, CIII).

It localises to the mitochondrion inner membrane. It carries out the reaction 4 Fe(II)-[cytochrome c] + O2 + 8 H(+)(in) = 4 Fe(III)-[cytochrome c] + 2 H2O + 4 H(+)(out). Functionally, component of the cytochrome c oxidase, the last enzyme in the mitochondrial electron transport chain which drives oxidative phosphorylation. The respiratory chain contains 3 multisubunit complexes succinate dehydrogenase (complex II, CII), ubiquinol-cytochrome c oxidoreductase (cytochrome b-c1 complex, complex III, CIII) and cytochrome c oxidase (complex IV, CIV), that cooperate to transfer electrons derived from NADH and succinate to molecular oxygen, creating an electrochemical gradient over the inner membrane that drives transmembrane transport and the ATP synthase. Cytochrome c oxidase is the component of the respiratory chain that catalyzes the reduction of oxygen to water. Electrons originating from reduced cytochrome c in the intermembrane space (IMS) are transferred via the dinuclear copper A center (CU(A)) of subunit 2 and heme A of subunit 1 to the active site in subunit 1, a binuclear center (BNC) formed by heme A3 and copper B (CU(B)). The BNC reduces molecular oxygen to 2 water molecules using 4 electrons from cytochrome c in the IMS and 4 protons from the mitochondrial matrix. The protein is Cytochrome c oxidase subunit 3 (COX3) of Allomyces macrogynus.